We begin with the raw amino-acid sequence, 386 residues long: Lipid-A-disaccharide synthase (386 aa).

It belongs to the LpxB family.

It catalyses the reaction a lipid X + a UDP-2-N,3-O-bis[(3R)-3-hydroxyacyl]-alpha-D-glucosamine = a lipid A disaccharide + UDP + H(+). Its pathway is bacterial outer membrane biogenesis; LPS lipid A biosynthesis. Functionally, condensation of UDP-2,3-diacylglucosamine and 2,3-diacylglucosamine-1-phosphate to form lipid A disaccharide, a precursor of lipid A, a phosphorylated glycolipid that anchors the lipopolysaccharide to the outer membrane of the cell. The protein is Lipid-A-disaccharide synthase of Chromobacterium violaceum (strain ATCC 12472 / DSM 30191 / JCM 1249 / CCUG 213 / NBRC 12614 / NCIMB 9131 / NCTC 9757 / MK).